Consider the following 449-residue polypeptide: UDP-N-acetylglucosamine 1-carboxyvinyltransferase (449 aa).

The segment covering 1–12 has biased composition (basic and acidic residues); it reads MQVTVNEHDAVE. Residues 1–30 are disordered; that stretch reads MQVTVNEHDAVERVATATPAGNREAHAHGT. A phosphoenolpyruvate-binding site is contributed by 51-52; that stretch reads KN. Residue R121 participates in UDP-N-acetyl-alpha-D-glucosamine binding. The active-site Proton donor is C145. 2-(S-cysteinyl)pyruvic acid O-phosphothioketal is present on C145. UDP-N-acetyl-alpha-D-glucosamine is bound by residues 150 to 154, D333, and I355; that span reads RPVDQ.

This sequence belongs to the EPSP synthase family. MurA subfamily.

The protein localises to the cytoplasm. The enzyme catalyses phosphoenolpyruvate + UDP-N-acetyl-alpha-D-glucosamine = UDP-N-acetyl-3-O-(1-carboxyvinyl)-alpha-D-glucosamine + phosphate. Its pathway is cell wall biogenesis; peptidoglycan biosynthesis. In terms of biological role, cell wall formation. Adds enolpyruvyl to UDP-N-acetylglucosamine. This is UDP-N-acetylglucosamine 1-carboxyvinyltransferase from Burkholderia pseudomallei (strain 1710b).